Here is a 108-residue protein sequence, read N- to C-terminus: Nucleoid-associated protein BMASAVP1_A1850 (108 aa).

The disordered stretch occupies residues 84-108; sequence EATSQEKMSGMTSGLPLPPGFKLPF. Positions 85 to 95 are enriched in polar residues; the sequence is ATSQEKMSGMT. Over residues 99 to 108 the composition is skewed to pro residues; sequence PLPPGFKLPF.

The protein belongs to the YbaB/EbfC family. As to quaternary structure, homodimer.

It is found in the cytoplasm. It localises to the nucleoid. In terms of biological role, binds to DNA and alters its conformation. May be involved in regulation of gene expression, nucleoid organization and DNA protection. This Burkholderia mallei (strain SAVP1) protein is Nucleoid-associated protein BMASAVP1_A1850.